The following is a 730-amino-acid chain: Acetylene hydratase (730 aa).

The [4Fe-4S] cluster site is built by Cys-9 and Cys-12. Asp-13 is a catalytic residue. 2 residues coordinate [4Fe-4S] cluster: Cys-16 and Cys-46. W-bis(molybdopterin guanine dinucleotide) contacts are provided by residues Lys-48, 111–114 (TEIN), Cys-141, 172–173 (KN), 177–179 (HNW), 199–202 (LDPR), 218–221 (YGTD), Ser-296, Gln-300, 416–418 (ASN), 422–423 (GY), 442–444 (YDQ), Asp-460, Arg-465, 602–613 (FAGLREDSNFQS), Arg-606, His-676, Asp-699, and Arg-720.

The protein belongs to the prokaryotic molybdopterin-containing oxidoreductase family. As to quaternary structure, monomer. Requires [4Fe-4S] cluster as cofactor. The cofactor is W-bis(molybdopterin guanine dinucleotide).

The catalysed reaction is acetaldehyde = acetylene + H2O. In terms of biological role, catalyzes the hydration of acetylene to form acetaldehyde. Ethylene cannot act as a substrate. In Syntrophotalea acetylenica (Pelobacter acetylenicus), this protein is Acetylene hydratase.